Reading from the N-terminus, the 132-residue chain is Probable prefoldin subunit 4 (132 aa).

It belongs to the prefoldin subunit beta family. In terms of assembly, heterohexamer of two PFD-alpha type and four PFD-beta type subunits.

Its function is as follows. Binds specifically to cytosolic chaperonin (c-CPN) and transfers target proteins to it. Binds to nascent polypeptide chain and promotes folding in an environment in which there are many competing pathways for nonnative proteins. This chain is Probable prefoldin subunit 4 (pfdn4), found in Dictyostelium discoideum (Social amoeba).